A 227-amino-acid polypeptide reads, in one-letter code: N-acetyltransferase 8 (227 aa).

Over 1-42 (MAPCHIRKYQESDRQWVVGLLSRGMAEHAPATFRQLLKLPRT) the chain is Cytoplasmic. The helical; Signal-anchor for type II membrane protein transmembrane segment at 43–63 (LILLLGGPLALLLVSGSWLLA) threads the bilayer. The N-acetyltransferase domain maps to 61–220 (LLALVFSISL…HTVHFIYHLP (160 aa)). The Lumenal portion of the chain corresponds to 64-227 (LVFSISLFPA…HLPSSKVGSL (164 aa)).

Belongs to the NAT8 family. Preferentially expressed in liver and kidney. Also detected in brain (at protein level).

The protein resides in the endoplasmic reticulum-Golgi intermediate compartment membrane. Its subcellular location is the endoplasmic reticulum membrane. The catalysed reaction is L-lysyl-[protein] + acetyl-CoA = N(6)-acetyl-L-lysyl-[protein] + CoA + H(+). It catalyses the reaction an S-substituted L-cysteine + acetyl-CoA = an N-acetyl-L-cysteine-S-conjugate + CoA + H(+). It functions in the pathway sulfur metabolism; glutathione metabolism. Functionally, endoplasmic reticulum (ER)-membrane-bound lysine N-acetyltransferase catalyzing the N6-acetylation of lysine residues in the lumen of the ER in various proteins, including PROM1 and BACE1, using acetyl-CoA as acetyl donor. Thereby, may regulate apoptosis through the acetylation and the regulation of the expression of PROM1. May also regulate amyloid beta-peptide secretion through acetylation of BACE1 and the regulation of its expression in neurons. N(6)-lysine acetylation in the ER maintains protein homeostasis and regulates reticulophagy. Alternatively, acetylates the free alpha-amino group of cysteine S-conjugates to form mercapturic acids. This is the final step in a major route for detoxification of a wide variety of reactive electrophiles which starts with their incorporation into glutathione S-conjugates. The glutathione S-conjugates are then further processed into cysteine S-conjugates and finally mercapturic acids which are water soluble and can be readily excreted in urine or bile. In Homo sapiens (Human), this protein is N-acetyltransferase 8.